We begin with the raw amino-acid sequence, 203 residues long: Thymidylate kinase (203 aa).

ATP is bound at residue 10–17 (GIDGAGKS).

Belongs to the thymidylate kinase family.

The catalysed reaction is dTMP + ATP = dTDP + ADP. Functionally, phosphorylation of dTMP to form dTDP in both de novo and salvage pathways of dTTP synthesis. This chain is Thymidylate kinase, found in Cupriavidus pinatubonensis (strain JMP 134 / LMG 1197) (Cupriavidus necator (strain JMP 134)).